The sequence spans 555 residues: Urocanate hydratase (555 aa).

Residues 51–52, glutamine 129, 175–177, glutamate 195, 262–266, 272–273, and tyrosine 321 each bind NAD(+); these read GG, GMG, QTSAH, and YL. The active site involves cysteine 409. Glycine 491 contacts NAD(+).

It belongs to the urocanase family. The cofactor is NAD(+).

The protein localises to the cytoplasm. It catalyses the reaction 4-imidazolone-5-propanoate = trans-urocanate + H2O. The protein operates within amino-acid degradation; L-histidine degradation into L-glutamate; N-formimidoyl-L-glutamate from L-histidine: step 2/3. Catalyzes the conversion of urocanate to 4-imidazolone-5-propionate. This Xanthomonas euvesicatoria pv. vesicatoria (strain 85-10) (Xanthomonas campestris pv. vesicatoria) protein is Urocanate hydratase.